The chain runs to 122 residues: Large ribosomal subunit protein uL14 (122 aa).

It belongs to the universal ribosomal protein uL14 family. Part of the 50S ribosomal subunit. Forms a cluster with proteins L3 and L19. In the 70S ribosome, L14 and L19 interact and together make contacts with the 16S rRNA in bridges B5 and B8.

Its function is as follows. Binds to 23S rRNA. Forms part of two intersubunit bridges in the 70S ribosome. The protein is Large ribosomal subunit protein uL14 of Bordetella parapertussis (strain 12822 / ATCC BAA-587 / NCTC 13253).